The sequence spans 293 residues: Sphingolipid C4-hydroxylase sur2 (293 aa).

3 helical membrane-spanning segments follow: residues 18–38 (LVSP…LHYI), 68–88 (AVLF…MFEG), and 127–147 (FIVP…WQYF). In terms of domain architecture, Fatty acid hydroxylase spans 136–270 (FAFFIIDSWQ…FTFWDHVLGT (135 aa)).

This sequence belongs to the sterol desaturase family.

The protein localises to the endoplasmic reticulum membrane. It participates in membrane lipid metabolism; sphingolipid biosynthesis. Functionally, required for hydroxylation of C-4 in the sphingoid moiety of ceramide. Involved in the response to syringomycin. This chain is Sphingolipid C4-hydroxylase sur2 (sur2), found in Schizosaccharomyces pombe (strain 972 / ATCC 24843) (Fission yeast).